We begin with the raw amino-acid sequence, 196 residues long: Protein/nucleic acid deglycase 3 (196 aa).

Cysteine 106 (nucleophile) is an active-site residue. Cysteine 106 carries the post-translational modification Cysteine sulfinic acid (-SO2H); alternate.

This sequence belongs to the peptidase C56 family. In terms of assembly, homodimer. In terms of processing, cys-106 is easily oxidized to sulfinic acid.

The catalysed reaction is N(omega)-(1-hydroxy-2-oxopropyl)-L-arginyl-[protein] + H2O = lactate + L-arginyl-[protein] + H(+). It carries out the reaction N(6)-(1-hydroxy-2-oxopropyl)-L-lysyl-[protein] + H2O = lactate + L-lysyl-[protein] + H(+). The enzyme catalyses S-(1-hydroxy-2-oxopropyl)-L-cysteinyl-[protein] + H2O = lactate + L-cysteinyl-[protein] + H(+). It catalyses the reaction N(omega)-(1-hydroxy-2-oxoethyl)-L-arginyl-[protein] + H2O = L-arginyl-[protein] + glycolate + H(+). The catalysed reaction is N(6)-(1-hydroxy-2-oxoethyl)-L-lysyl-[protein] + H2O = glycolate + L-lysyl-[protein] + H(+). It carries out the reaction S-(1-hydroxy-2-oxoethyl)-L-cysteinyl-[protein] + H2O = glycolate + L-cysteinyl-[protein] + H(+). The enzyme catalyses N(2)-(1-hydroxy-2-oxopropyl)-dGTP + H2O = lactate + dGTP + H(+). It catalyses the reaction N(2)-(1-hydroxy-2-oxopropyl)-GTP + H2O = lactate + GTP + H(+). The catalysed reaction is N(2)-(1-hydroxy-2-oxopropyl)-GDP + H2O = lactate + GDP + H(+). It carries out the reaction N(2)-(1-hydroxy-2-oxopropyl)-GMP + H2O = lactate + GMP + H(+). The enzyme catalyses N(2)-(1-hydroxy-2-oxoethyl)-dGTP + H2O = dGTP + glycolate + H(+). It catalyses the reaction N(2)-(1-hydroxy-2-oxoethyl)-GTP + H2O = glycolate + GTP + H(+). The catalysed reaction is N(2)-(1-hydroxy-2-oxoethyl)-GDP + H2O = glycolate + GDP + H(+). It carries out the reaction N(2)-(1-hydroxy-2-oxoethyl)-GMP + H2O = glycolate + GMP + H(+). The enzyme catalyses an N(2)-(1-hydroxy-2-oxopropyl)-guanosine in RNA + H2O = a guanosine in RNA + lactate + H(+). It catalyses the reaction an N(2)-(1-hydroxy-2-oxopropyl)-2'-deoxyguanosine in DNA + H2O = a 2'-deoxyguanosine in DNA + lactate + H(+). The catalysed reaction is an N(2)-(1-hydroxy-2-oxoethyl)-guanosine in RNA + H2O = a guanosine in RNA + glycolate + H(+). It carries out the reaction an N(2)-(1-hydroxy-2-oxoethyl)-2'-deoxyguanosine in DNA + H2O = a 2'-deoxyguanosine in DNA + glycolate + H(+). With respect to regulation, glyoxalase activity is inhibited by zinc ions. Active as a chaperone in both its reduced and oxidized states, and is more active in its oxidized form. Protein and nucleotide deglycase that catalyzes the deglycation of the Maillard adducts formed between amino groups of proteins or nucleotides and reactive carbonyl groups of glyoxals. Thus, functions as a protein deglycase that repairs methylglyoxal- and glyoxal-glycated proteins, and releases repaired proteins and lactate or glycolate, respectively. Deglycates cysteine, arginine and lysine residues in proteins, and thus reactivates these proteins by reversing glycation by glyoxals. Is able to repair glycated serum albumin, collagen, glyceraldehyde-3-phosphate dehydrogenase, and fructose biphosphate aldolase. Acts on early glycation intermediates (hemithioacetals and aminocarbinols), preventing the formation of Schiff bases and advanced glycation endproducts (AGE) that cause irreversible damage. Also functions as a nucleotide deglycase able to repair glycated guanine in the free nucleotide pool (GTP, GDP, GMP, dGTP) and in DNA and RNA. Is thus involved in a major nucleotide repair system named guanine glycation repair (GG repair), dedicated to reversing methylglyoxal and glyoxal damage via nucleotide sanitization and direct nucleic acid repair. However, is less efficient than Hsp31 and YhbO, suggesting that YajL might be preferentially dedicated to protein repair. Displays a covalent chaperone activity with sulfenylated thiol proteins by forming mixed disulfides with members of the thiol proteome, and preferentially with sulfenylated cellular proteins, upon oxidative stress; these mixed disulfides can be subsequently reduced by low-molecular-weight thiols to regenerate YajL and reduced proteins. Involved in biogenesis of ribosomal proteins, probably as a ribosomal protein-folding chaperone. Confers resistance to oxidative stress. Plays an important role in protection against electrophile/carbonyl stress. The chaperone activity reported for YajL is probably recruited to execute its deglycase activity, to interact with non-native glycated proteins and gain access to partially buried glycated sites. Also displays an apparent glyoxalase activity that in fact reflects its deglycase activity. This Escherichia coli (strain K12) protein is Protein/nucleic acid deglycase 3 (yajL).